A 233-amino-acid polypeptide reads, in one-letter code: Enolase-phosphatase E1 (233 aa).

Positions 6 and 8 each coordinate Mg(2+). Substrate contacts are provided by residues 128 to 129 (SS) and Lys163. Asp188 is a binding site for Mg(2+).

The protein belongs to the HAD-like hydrolase superfamily. MasA/MtnC family. As to quaternary structure, monomer. It depends on Mg(2+) as a cofactor.

It localises to the cytoplasm. The protein resides in the nucleus. The enzyme catalyses 5-methylsulfanyl-2,3-dioxopentyl phosphate + H2O = 1,2-dihydroxy-5-(methylsulfanyl)pent-1-en-3-one + phosphate. Its pathway is amino-acid biosynthesis; L-methionine biosynthesis via salvage pathway; L-methionine from S-methyl-5-thio-alpha-D-ribose 1-phosphate: step 3/6. It functions in the pathway amino-acid biosynthesis; L-methionine biosynthesis via salvage pathway; L-methionine from S-methyl-5-thio-alpha-D-ribose 1-phosphate: step 4/6. Functionally, bifunctional enzyme that catalyzes the enolization of 2,3-diketo-5-methylthiopentyl-1-phosphate (DK-MTP-1-P) into the intermediate 2-hydroxy-3-keto-5-methylthiopentenyl-1-phosphate (HK-MTPenyl-1-P), which is then dephosphorylated to form the acireductone 1,2-dihydroxy-3-keto-5-methylthiopentene (DHK-MTPene). This is Enolase-phosphatase E1 from Yarrowia lipolytica (strain CLIB 122 / E 150) (Yeast).